We begin with the raw amino-acid sequence, 192 residues long: Probable nicotinate-nucleotide adenylyltransferase (192 aa).

The protein belongs to the NadD family.

The catalysed reaction is nicotinate beta-D-ribonucleotide + ATP + H(+) = deamido-NAD(+) + diphosphate. The protein operates within cofactor biosynthesis; NAD(+) biosynthesis; deamido-NAD(+) from nicotinate D-ribonucleotide: step 1/1. Catalyzes the reversible adenylation of nicotinate mononucleotide (NaMN) to nicotinic acid adenine dinucleotide (NaAD). This Shouchella clausii (strain KSM-K16) (Alkalihalobacillus clausii) protein is Probable nicotinate-nucleotide adenylyltransferase.